Here is a 179-residue protein sequence, read N- to C-terminus: NADH-quinone oxidoreductase subunit I (179 aa).

4Fe-4S ferredoxin-type domains are found at residues 45–74 and 90–119; these read RHPDTGLEKCIGCSLCAAVCPAYAIYVEAA and KVYEINMLRCIFCGLCEEACPTGAVVLGNE. The [4Fe-4S] cluster site is built by C54, C57, C60, C64, C99, C102, C105, and C109. The interval 146–179 is disordered; it reads PQRREAQRTGKPVRLGFKVPKGPRPELEGVEYPR. A compositionally biased stretch (basic and acidic residues) spans 168–179; it reads PRPELEGVEYPR.

It belongs to the complex I 23 kDa subunit family. As to quaternary structure, NDH-1 is composed of 15 different subunits. Subunits NuoA, H, J, K, L, M, N constitute the membrane sector of the complex. The cofactor is [4Fe-4S] cluster.

The protein resides in the cell membrane. It carries out the reaction a quinone + NADH + 5 H(+)(in) = a quinol + NAD(+) + 4 H(+)(out). Functionally, NDH-1 shuttles electrons from NADH, via FMN and iron-sulfur (Fe-S) centers, to quinones in the respiratory chain. The immediate electron acceptor for the enzyme in this species is believed to be ubiquinone. Couples the redox reaction to proton translocation (for every two electrons transferred, four hydrogen ions are translocated across the cytoplasmic membrane), and thus conserves the redox energy in a proton gradient. This Deinococcus geothermalis (strain DSM 11300 / CIP 105573 / AG-3a) protein is NADH-quinone oxidoreductase subunit I.